A 550-amino-acid polypeptide reads, in one-letter code: MKTKFIFITGGVLSSLGKGLAAASIGALLKARGLKVTIQKLDPYINVDPGTMNPFQHGEVYVTDDGAETDLDLGHYERYLGESLSQKNNYTSGSIYNRVITKERRGDYLGGTVQVIPHVTDEIKNAILGLAEDEPDVALIEIGGTVGDIEGLPFLEAIRQLRGDLGKDHCLYVHLTLVPYLKAAGEHKTKPTQHSVKELRSIGIQPDIILCRCEKAISAELKRKIALFCDVDQDAVFSSVDVDNIYEVPLRFYEEGFDQKIAIMLRLPAKNANLESWETLIHTCSHPEGQVTIGIVGKYVDLKEAYKSLHEALIHGGVANKVKVNLRYVNSEEITEANVAEKLAGCDGILVPGGFGHRGVEGKIRSIRHAREHKIPFFGICLGMQCAVIEYARNVLGLADANSEEFNELTDNKVIYLMTEWYDFRKGAVERRDASSDKGGTLRLGAYPCVVVPGTRAWDAYGAERVDERHRHRFEFNKAYFEAMAEKGLVFSGLSPDGELVEIVELPDHPWFLGCQFHPEFKSNPMRPHPLFREFIKAAKKEAMGGKKGK.

The tract at residues 1–267 (MKTKFIFITG…DQKIAIMLRL (267 aa)) is amidoligase domain. S14 is a binding site for CTP. UTP is bound at residue S14. Residues 15–20 (SLGKGL) and D72 contribute to the ATP site. Positions 72 and 141 each coordinate Mg(2+). CTP-binding positions include 148–150 (DIE), 188–193 (KTKPTQ), and K224. Residues 188–193 (KTKPTQ) and K224 each bind UTP. The Glutamine amidotransferase type-1 domain maps to 292–545 (TIGIVGKYVD…IKAAKKEAMG (254 aa)). G354 provides a ligand contact to L-glutamine. Residue C381 is the Nucleophile; for glutamine hydrolysis of the active site. Residues 382–385 (LGMQ), E405, and R473 each bind L-glutamine. Catalysis depends on residues H518 and E520.

Belongs to the CTP synthase family. Homotetramer.

It catalyses the reaction UTP + L-glutamine + ATP + H2O = CTP + L-glutamate + ADP + phosphate + 2 H(+). It carries out the reaction L-glutamine + H2O = L-glutamate + NH4(+). The enzyme catalyses UTP + NH4(+) + ATP = CTP + ADP + phosphate + 2 H(+). It functions in the pathway pyrimidine metabolism; CTP biosynthesis via de novo pathway; CTP from UDP: step 2/2. With respect to regulation, allosterically activated by GTP, when glutamine is the substrate; GTP has no effect on the reaction when ammonia is the substrate. The allosteric effector GTP functions by stabilizing the protein conformation that binds the tetrahedral intermediate(s) formed during glutamine hydrolysis. Inhibited by the product CTP, via allosteric rather than competitive inhibition. Functionally, catalyzes the ATP-dependent amination of UTP to CTP with either L-glutamine or ammonia as the source of nitrogen. Regulates intracellular CTP levels through interactions with the four ribonucleotide triphosphates. The protein is CTP synthase of Nitratidesulfovibrio vulgaris (strain DSM 19637 / Miyazaki F) (Desulfovibrio vulgaris).